The sequence spans 197 residues: MARYIGPKTKIACRFGELIFGPDKAFSIRNSSSSRRKKKTSEYGIQLREKQKAKYIYGVLENQFRGFFEKASRSRGITGVVLLQLLESRLDNLVYRMGLAKTRAEARQLVSHKHITIDNNVVNIPSYLVKPGQIIGVRERAKSLEIILDNLIRANHNKYSWIEYDKSSMSARYLYIPERMDIPENIKEQLIVELYSK.

An S4 RNA-binding domain is found at 88 to 150 (SRLDNLVYRM…AKSLEIILDN (63 aa)).

Belongs to the universal ribosomal protein uS4 family. Part of the 30S ribosomal subunit. Contacts protein S5. The interaction surface between S4 and S5 is involved in control of translational fidelity.

Its function is as follows. One of the primary rRNA binding proteins, it binds directly to 16S rRNA where it nucleates assembly of the body of the 30S subunit. In terms of biological role, with S5 and S12 plays an important role in translational accuracy. The chain is Small ribosomal subunit protein uS4 from Azobacteroides pseudotrichonymphae genomovar. CFP2.